A 455-amino-acid chain; its full sequence is Nucleoprotein (455 aa).

Residues 1–62 (MSFVPGQENA…ATTQPNSGSV (62 aa)) are disordered. Over residues 9-23 (NAGSRSSSGNRAGNG) the composition is skewed to low complexity. 2 stretches are compositionally biased toward polar residues: residues 30 to 42 (WADQTERGLNNQN) and 49 to 61 (PKQTATTQPNSGS). The RNA-binding stretch occupies residues 56–197 (QPNSGSVVPH…GFYVEGSGRS (142 aa)). One can recognise a CoV N NTD domain in the interval 64–193 (PHYSWFSGIT…VLPQGFYVEG (130 aa)). Arginine 109, arginine 125, and arginine 167 together coordinate RNA. Disordered stretches follow at residues 159–230 (RTSA…STVK), 271–290 (PRQKRTPNKQCPVQQCFGKR), and 382–429 (QDGG…RELT). The residue at position 170 (serine 170) is a Phosphoserine; by host. At threonine 177 the chain carries Phosphothreonine; by host. A compositionally biased stretch (low complexity) spans 193–212 (GSGRSAPASRSGSRPQSRGP). Serine 194 is modified (phosphoserine; by host). The span at 215–227 (RARSSSNQRQPAS) shows a compositional bias: polar residues. A CoV N CTD domain is found at 260–383 (AKEVRQKILN…ENLNAYQNQD (124 aa)). Residues 267-384 (ILNKPRQKRT…NLNAYQNQDG (118 aa)) form a dimerization region. Serine 390 bears the Phosphoserine; by host mark. Basic residues predominate over residues 393-402 (PQRKRGTKQK). A Phosphoserine; by host modification is found at serine 425. Threonine 429 is subject to Phosphothreonine; by host.

It belongs to the betacoronavirus nucleocapsid protein family. Homooligomer. Both monomeric and oligomeric forms interact with RNA. Interacts with protein M. Interacts with NSP3; this interaction serves to tether the genome to the newly translated replicase-transcriptase complex at a very early stage of infection. Interacts (when phosphorylated) with host DDX1; this interaction is essential to produce a full set of subgenomic and genomic RNAs. Post-translationally, ADP-ribosylated. The ADP-ribosylation is retained in the virion during infection. In terms of processing, phosphorylated on serine and threonine residues. Phosphorylated by host GSK3A and GSK3B. Phosphorylation allows recruitment of host RNA helicase DDX1 which facilitates template readthrough and enables longer subgenomic mRNA synthesis.

The protein resides in the virion. It is found in the host endoplasmic reticulum-Golgi intermediate compartment. The protein localises to the host Golgi apparatus. In terms of biological role, packages the positive strand viral genome RNA into a helical ribonucleocapsid (RNP) and plays a fundamental role during virion assembly through its interactions with the viral genome and membrane protein M. Plays an important role in enhancing the efficiency of subgenomic viral RNA transcription as well as viral replication. The chain is Nucleoprotein from Murine coronavirus (strain JHM) (MHV-JHM).